The following is a 458-amino-acid chain: UPF0210 protein Mevan_0738 (458 aa).

The protein belongs to the UPF0210 family.

The sequence is that of UPF0210 protein Mevan_0738 from Methanococcus vannielii (strain ATCC 35089 / DSM 1224 / JCM 13029 / OCM 148 / SB).